A 371-amino-acid polypeptide reads, in one-letter code: GTPase Obg (371 aa).

The 159-residue stretch at 1-159 (MKFLDQAKVY…KTIWLRLKLI (159 aa)) folds into the Obg domain. The OBG-type G domain maps to 160-327 (ADAGLVGLPN…VLRALRDIIV (168 aa)). GTP is bound by residues 166–173 (GLPNAGKS), 191–195 (FTTLH), 212–215 (DIPG), 279–282 (SQID), and 308–310 (SAI). Residues Ser-173 and Thr-193 each coordinate Mg(2+). The disordered stretch occupies residues 337–371 (APMKALKVRHRDMQSSGNEGESEDNSDRDDEEQQG). A compositionally biased stretch (acidic residues) spans 356–371 (GESEDNSDRDDEEQQG).

This sequence belongs to the TRAFAC class OBG-HflX-like GTPase superfamily. OBG GTPase family. Monomer. Requires Mg(2+) as cofactor.

It localises to the cytoplasm. In terms of biological role, an essential GTPase which binds GTP, GDP and possibly (p)ppGpp with moderate affinity, with high nucleotide exchange rates and a fairly low GTP hydrolysis rate. Plays a role in control of the cell cycle, stress response, ribosome biogenesis and in those bacteria that undergo differentiation, in morphogenesis control. The protein is GTPase Obg of Rhizobium rhizogenes (strain K84 / ATCC BAA-868) (Agrobacterium radiobacter).